The sequence spans 202 residues: MQAFIRAHGIILPMNQDHVDTDAIIPQRWLVTVERDGLADGFMGAWRYDEHGQPRPECVLNQPAYQGAAIVLARENYGCGSSREHAVWAHQGYGIRAIVAASYGPIFHENCLKNGLLPITLPAADVATLMAQALADPGCACEVDLVSQRVIGPDGRAYPFEIDAGRRQLLLEGVDDIDLALARAADIAAFQRRQQQDQPWLA.

Belongs to the LeuD family. LeuD type 1 subfamily. In terms of assembly, heterodimer of LeuC and LeuD.

It carries out the reaction (2R,3S)-3-isopropylmalate = (2S)-2-isopropylmalate. The protein operates within amino-acid biosynthesis; L-leucine biosynthesis; L-leucine from 3-methyl-2-oxobutanoate: step 2/4. In terms of biological role, catalyzes the isomerization between 2-isopropylmalate and 3-isopropylmalate, via the formation of 2-isopropylmaleate. The protein is 3-isopropylmalate dehydratase small subunit 2 of Bordetella parapertussis (strain 12822 / ATCC BAA-587 / NCTC 13253).